The following is a 126-amino-acid chain: Fluoride-specific ion channel FluC (126 aa).

The next 4 helical transmembrane spans lie at 6-26 (FVAV…FSVL), 36-56 (YGTL…VGFF), 69-89 (LAIT…SEVV), and 99-119 (WAAM…ALGL). Residues G76 and T79 each contribute to the Na(+) site.

This sequence belongs to the fluoride channel Fluc/FEX (TC 1.A.43) family.

It localises to the cell inner membrane. The enzyme catalyses fluoride(in) = fluoride(out). Na(+) is not transported, but it plays an essential structural role and its presence is essential for fluoride channel function. Its function is as follows. Fluoride-specific ion channel. Important for reducing fluoride concentration in the cell, thus reducing its toxicity. The polypeptide is Fluoride-specific ion channel FluC (Cupriavidus taiwanensis (strain DSM 17343 / BCRC 17206 / CCUG 44338 / CIP 107171 / LMG 19424 / R1) (Ralstonia taiwanensis (strain LMG 19424))).